The sequence spans 845 residues: Protein translocase subunit SecA 1 (845 aa).

Residues Gln91, 109 to 113 (GEGKT), and Asp498 contribute to the ATP site. A disordered region spans residues 795-845 (TDFGTAQHVSAEDGKEKAKKQPIVKGDKVGRNDPCPCGSGKKYKNCHGKEE). Zn(2+)-binding residues include Cys829, Cys831, Cys840, and His841. Positions 835 to 845 (KKYKNCHGKEE) are enriched in basic residues.

Belongs to the SecA family. As to quaternary structure, monomer and homodimer. Part of the essential Sec protein translocation apparatus which comprises SecA, SecYEG and auxiliary proteins SecDF. Other proteins may also be involved. Zn(2+) serves as cofactor.

The protein localises to the cell membrane. It localises to the cytoplasm. The catalysed reaction is ATP + H2O + cellular proteinSide 1 = ADP + phosphate + cellular proteinSide 2.. Part of the Sec protein translocase complex. Interacts with the SecYEG preprotein conducting channel. Has a central role in coupling the hydrolysis of ATP to the transfer of proteins into and across the cell membrane, serving as an ATP-driven molecular motor driving the stepwise translocation of polypeptide chains across the membrane. This chain is Protein translocase subunit SecA 1, found in Staphylococcus haemolyticus (strain JCSC1435).